We begin with the raw amino-acid sequence, 549 residues long: Glucose-6-phosphate isomerase (549 aa).

The active-site Proton donor is E355. Active-site residues include H386 and K514.

It belongs to the GPI family.

The protein localises to the cytoplasm. The catalysed reaction is alpha-D-glucose 6-phosphate = beta-D-fructose 6-phosphate. It functions in the pathway carbohydrate biosynthesis; gluconeogenesis. It participates in carbohydrate degradation; glycolysis; D-glyceraldehyde 3-phosphate and glycerone phosphate from D-glucose: step 2/4. Its function is as follows. Catalyzes the reversible isomerization of glucose-6-phosphate to fructose-6-phosphate. The polypeptide is Glucose-6-phosphate isomerase (Aeromonas salmonicida (strain A449)).